Reading from the N-terminus, the 276-residue chain is Phosphate import ATP-binding protein PstB 2 (276 aa).

Positions 22–262 (MAAVNLTLGF…PKHAETARYV (241 aa)) constitute an ABC transporter domain. 54-61 (GPTGSGKT) provides a ligand contact to ATP.

Belongs to the ABC transporter superfamily. Phosphate importer (TC 3.A.1.7) family. In terms of assembly, the complex is composed of two ATP-binding proteins (PstB), two transmembrane proteins (PstC and PstA) and a solute-binding protein (PstS).

It is found in the cell membrane. It carries out the reaction phosphate(out) + ATP + H2O = ADP + 2 phosphate(in) + H(+). Its function is as follows. Part of the ABC transporter complex PstSACB involved in phosphate import. Responsible for energy coupling to the transport system. This is Phosphate import ATP-binding protein PstB 2 from Mycobacterium bovis (strain ATCC BAA-935 / AF2122/97).